The following is a 381-amino-acid chain: Erythronate-4-phosphate dehydrogenase (381 aa).

Residues serine 45 and threonine 66 each contribute to the substrate site. Residues aspartate 146 and threonine 173 each coordinate NAD(+). Residue arginine 206 is part of the active site. Aspartate 230 provides a ligand contact to NAD(+). Glutamate 235 is an active-site residue. Residue histidine 252 is the Proton donor of the active site. Glycine 255 provides a ligand contact to NAD(+). Tyrosine 256 is a substrate binding site.

This sequence belongs to the D-isomer specific 2-hydroxyacid dehydrogenase family. PdxB subfamily. As to quaternary structure, homodimer.

Its subcellular location is the cytoplasm. The catalysed reaction is 4-phospho-D-erythronate + NAD(+) = (R)-3-hydroxy-2-oxo-4-phosphooxybutanoate + NADH + H(+). Its pathway is cofactor biosynthesis; pyridoxine 5'-phosphate biosynthesis; pyridoxine 5'-phosphate from D-erythrose 4-phosphate: step 2/5. Catalyzes the oxidation of erythronate-4-phosphate to 3-hydroxy-2-oxo-4-phosphonooxybutanoate. In Hahella chejuensis (strain KCTC 2396), this protein is Erythronate-4-phosphate dehydrogenase.